Reading from the N-terminus, the 2236-residue chain is uncharacterized protein (2236 aa).

2 Spectrin repeats span residues 46-146 (QVYL…RQLE) and 238-335 (QKFV…TDIE). Coiled-coil stretches lie at residues 496-541 (VVEQ…TVNS) and 603-631 (DDQQKNMANEELRKTYENLKKIEMEVGRQ). 5 Spectrin repeats span residues 839–949 (YEYD…KTLK), 1048–1146 (KKLE…KRME), 1261–1361 (LGAE…VDLN), 1367–1459 (ILID…KSLA), and 1562–1667 (QKVV…NRLE). Positions 1835–1869 (QNSTDAEKKLSLVSERLNALKKQLDLLAEKIAVDD) form a coiled coil. 2 EF-hand domains span residues 2104 to 2139 (KQLHEFELAFDYFDRERNGWLDYKHFELCLKSQGYN) and 2141 to 2176 (SAENTLKETMTLLDPSTTGHIQKHDYVRYMVKHETT). 5 residues coordinate Ca(2+): Asp-2154, Ser-2156, Thr-2158, His-2160, and Asp-2165.

It belongs to the spectrin family.

This is an uncharacterized protein from Caenorhabditis elegans.